Reading from the N-terminus, the 143-residue chain is Adrenodoxin, mitochondrial (143 aa).

The transit peptide at Cys1–Ala19 directs the protein to the mitochondrion. In terms of domain architecture, 2Fe-2S ferredoxin-type spans Ile26–Val130. Residues Cys65, Cys71, Cys74, and Cys111 each coordinate [2Fe-2S] cluster.

It belongs to the adrenodoxin/putidaredoxin family. Requires [2Fe-2S] cluster as cofactor.

It is found in the mitochondrion matrix. Essential for the synthesis of various steroid hormones. Participates in the reduction of mitochondrial cytochrome P450 for steroidogenesis. Transfers electrons from adrenodoxin reductase to CYP11A1, a cytochrome P450 that catalyzes cholesterol side-chain cleavage. Does not form a ternary complex with adrenodoxin reductase and CYP11A1 but shuttles between the two enzymes to transfer electrons. The sequence is that of Adrenodoxin, mitochondrial (FDX1) from Gallus gallus (Chicken).